Consider the following 714-residue polypeptide: Fatty acid oxidation complex subunit alpha (714 aa).

The interval 1-190 is enoyl-CoA hydratase; sequence MEMASAFTLN…KLGLVDDVVP (190 aa). The interval 306–714 is 3-hydroxyacyl-CoA dehydrogenase; it reads APLNSVGILG…FWKTTATDLQ (409 aa).

The protein in the N-terminal section; belongs to the enoyl-CoA hydratase/isomerase family. It in the central section; belongs to the 3-hydroxyacyl-CoA dehydrogenase family. As to quaternary structure, heterotetramer of two alpha chains (FadJ) and two beta chains (FadI).

Its subcellular location is the cytoplasm. The catalysed reaction is a (3S)-3-hydroxyacyl-CoA = a (2E)-enoyl-CoA + H2O. It catalyses the reaction a 4-saturated-(3S)-3-hydroxyacyl-CoA = a (3E)-enoyl-CoA + H2O. The enzyme catalyses a (3S)-3-hydroxyacyl-CoA + NAD(+) = a 3-oxoacyl-CoA + NADH + H(+). It carries out the reaction (3S)-3-hydroxybutanoyl-CoA = (3R)-3-hydroxybutanoyl-CoA. It participates in lipid metabolism; fatty acid beta-oxidation. Its function is as follows. Catalyzes the formation of a hydroxyacyl-CoA by addition of water on enoyl-CoA. Also exhibits 3-hydroxyacyl-CoA epimerase and 3-hydroxyacyl-CoA dehydrogenase activities. This is Fatty acid oxidation complex subunit alpha from Escherichia coli (strain SMS-3-5 / SECEC).